Consider the following 565-residue polypeptide: Oxygen-dependent choline dehydrogenase (565 aa).

7-36 serves as a coordination point for FAD; sequence DYIICGAGSAGNVLATRLTEDPGVTVLLLE. Histidine 474 (proton acceptor) is an active-site residue.

It belongs to the GMC oxidoreductase family. Requires FAD as cofactor.

It carries out the reaction choline + A = betaine aldehyde + AH2. The enzyme catalyses betaine aldehyde + NAD(+) + H2O = glycine betaine + NADH + 2 H(+). It participates in amine and polyamine biosynthesis; betaine biosynthesis via choline pathway; betaine aldehyde from choline (cytochrome c reductase route): step 1/1. Functionally, involved in the biosynthesis of the osmoprotectant glycine betaine. Catalyzes the oxidation of choline to betaine aldehyde and betaine aldehyde to glycine betaine at the same rate. The chain is Oxygen-dependent choline dehydrogenase from Burkholderia pseudomallei (strain K96243).